The following is a 257-amino-acid chain: Snake venom serine protease 2C (257 aa).

The N-terminal stretch at Met-1–Ala-18 is a signal peptide. Positions Gln-19–Leu-24 are excised as a propeptide. One can recognise a Peptidase S1 domain in the interval Val-25–Ala-248. 6 disulfides stabilise this stretch: Cys-31–Cys-162, Cys-49–Cys-65, Cys-97–Cys-255, Cys-141–Cys-209, Cys-173–Cys-188, and Cys-199–Cys-224. Residues His-64 and Asp-109 each act as charge relay system in the active site. N-linked (GlcNAc...) asparagine glycosylation is found at Asn-116, Asn-120, and Asn-121. Ser-203 (charge relay system) is an active-site residue.

The protein belongs to the peptidase S1 family. Snake venom subfamily. As to quaternary structure, monomer. In terms of tissue distribution, expressed by the venom gland.

The protein localises to the secreted. Functionally, snake venom serine protease that may act in the hemostasis system of the prey. This is Snake venom serine protease 2C (TLG2C) from Craspedocephalus gramineus (Bamboo pit viper).